We begin with the raw amino-acid sequence, 858 residues long: MQEQYNPQEIEQKVQQHWDDSETFVVSEDPNKEKFYCLSMFPYPSGRLHMGHVRNYTIGDVVSRFQRLQGKNVMQPIGWDAFGLPAENAAVKNNTAPAPWTYENIEYMKNQLKLLGFGYDWKREFATCTPEYYRWEQEFFTKLYEQGLVYKKTSSVNWCPNDQTVLANEQVEDGCCWRCDTPVEQKKIPQWFIKITEYAQELLDDLDNLEGWPEMVKTMQRNWIGRSEGVELSFAVNGEEAPLEVYTTRPDTLMGVSYVGIAAGHPLAEKASKNNPELAAFVEECRNTKVAEAELATMEKKGMDTGLTAIHPLNGRVVPVYVANFVLMDYGTGAVMAVPAHDQRDYEFATKYGIDIIPVIKPEDGSELDVSEAAYTEKGVLFDSGEFDGLAFQEAFDAIAAKLEAEGKGKKTVNFRLRDWGVSRQRYWGAPIPMVTTEDGEVHPVPADQLPVILPEDVVMDGVTSPIKADKSWAETTFNGEPALRETDTFDTFMESSWYYARYCSPQADDILDPEKANYWLPVDQYVGGIEHACMHLLYSRFFHKLLRDAGYVTSDEPFKQLLCQGMVLADAFYHENEKGTKEWIAPTDVTVERDGKGRIEKAVDDQGREVEHSGMIKMSKSKNNGIDPQEMVDKYGADTVRLFMMFASPADMTLEWQESGVEGANRFLKRVWKLVHAHSSKGAAETVDASALSGNQKALRRDIHKTIAKVTDDIGRRQTFNTAIAAIMELMNKLAKAPQESVQDRAILDEALKAVVRMLYPMTPHISYEMWIALGESNVDSATWPTFDEKALVEDEKTIVVMINGKLRAKLTVAADATEEQVRELGLNDENAKKFLDGLTIRKVIFVPGKLLNIVAN.

Positions 42–52 match the 'HIGH' region motif; that stretch reads PYPSGRLHMGH. A 'KMSKS' region motif is present at residues 618-622; the sequence is KMSKS. Lys621 contributes to the ATP binding site.

This sequence belongs to the class-I aminoacyl-tRNA synthetase family.

It localises to the cytoplasm. It carries out the reaction tRNA(Leu) + L-leucine + ATP = L-leucyl-tRNA(Leu) + AMP + diphosphate. The sequence is that of Leucine--tRNA ligase from Vibrio atlanticus (strain LGP32) (Vibrio splendidus (strain Mel32)).